The sequence spans 552 residues: Putative transport protein ECA4401 (552 aa).

The next 5 membrane-spanning stretches (helical) occupy residues 4–24 (IALT…IGNW), 26–46 (IYGV…VGHV), 65–85 (FGLI…FFSS), 90–112 (GLRL…VMLH), and 158–178 (TGYA…MWLM). RCK C-terminal domains follow at residues 191-276 (KQFE…VIGN) and 279-361 (ETSL…IVGN). The next 6 membrane-spanning stretches (helical) occupy residues 371–391 (MLPV…PLMV), 393–413 (GFPV…ALVL), 439–459 (IVLF…DTLL), 464–484 (VWWI…VGIL), 493–513 (YLTL…LAFA), and 530–550 (VYPL…VLFL).

The protein belongs to the AAE transporter (TC 2.A.81) family. YidE subfamily.

The protein resides in the cell membrane. The sequence is that of Putative transport protein ECA4401 from Pectobacterium atrosepticum (strain SCRI 1043 / ATCC BAA-672) (Erwinia carotovora subsp. atroseptica).